The primary structure comprises 241 residues: MGCFNFIKVMMILFNMLIFLCGAALLAVGIWVSVDGPSFVKIFGPMSSSAMQFVNVGYFLIAAGAVLFALGFLGCYGAQTESKCALMTFFFILLLIFIAEVAAAVVALVYTTLAENFLTAVVVPNIKKEYGSQKDFTQVWNSTMAGLKCCGFTNYTDFEGSPYVRKNGTFPPYCCYDSVNNSFMEPCNNFTAHNMSVQGCFKQLLYDIRTNAVTVGGVAAGIGGLELAAMIVSMYLYCNLE.

Residues 1–11 (MGCFNFIKVMM) are Cytoplasmic-facing. The helical transmembrane segment at 12 to 32 (ILFNMLIFLCGAALLAVGIWV) threads the bilayer. The Extracellular portion of the chain corresponds to 33–52 (SVDGPSFVKIFGPMSSSAMQ). A helical membrane pass occupies residues 53–73 (FVNVGYFLIAAGAVLFALGFL). The Cytoplasmic portion of the chain corresponds to 74 to 88 (GCYGAQTESKCALMT). The helical transmembrane segment at 89 to 109 (FFFILLLIFIAEVAAAVVALV) threads the bilayer. Residues 110 to 211 (YTTLAENFLT…KQLLYDIRTN (102 aa)) lie on the Extracellular side of the membrane. 6 N-linked (GlcNAc...) asparagine glycosylation sites follow: Asn141, Asn154, Asn167, Asn180, Asn189, and Asn194. The helical transmembrane segment at 212-232 (AVTVGGVAAGIGGLELAAMIV) threads the bilayer. The Cytoplasmic portion of the chain corresponds to 233–241 (SMYLYCNLE).

It belongs to the tetraspanin (TM4SF) family. In terms of assembly, interacts with SLC19A2. Interacts with NTRK1/TRKA.

The protein resides in the lysosome membrane. Functionally, structural component of specialized membrane microdomains known as tetraspanin-enriched microdomains (TERMs), which act as platforms for receptor clustering and signaling. Participates thereby in diverse biological functions such as cell signal transduction, adhesion, migration and protein trafficking. Regulates neuronal differentiation in response to NGF by facilitating NGF-mediated activation of NTRK1/TRKA receptor tyrosine kinase and subsequent downstream signaling pathways. Plays a role in the inhibition of TNFalpha-induced apoptosis. Mechanistically, inhibits the NF-kappa-B signaling pathway by blocking phosphorylation of CHUK. Also promotes the stability of the thiamine transporter 1/SLC19A2 in intestinal epithelial cells leading to an increase of thiamine uptake process. This is Tetraspanin-1 (TSPAN1) from Bos taurus (Bovine).